The sequence spans 789 residues: Alpha-glucosidase 2 (789 aa).

Disordered stretches follow at residues M1–I24 and E512–P531. Residue D523 is the Proton donor of the active site. The Proton acceptor role is filled by E756.

It belongs to the glycosyl hydrolase 63 family.

It participates in glycan metabolism; N-glycan degradation. In Arabidopsis thaliana (Mouse-ear cress), this protein is Alpha-glucosidase 2 (GCS2).